Here is a 441-residue protein sequence, read N- to C-terminus: tRNA-2-methylthio-N(6)-dimethylallyladenosine synthase (441 aa).

The MTTase N-terminal domain maps to 5–121 (KKLFIKTYGC…LPQMEARLRE (117 aa)). Cys-14, Cys-50, Cys-84, Cys-159, Cys-163, and Cys-166 together coordinate [4Fe-4S] cluster. Positions 145–380 (ARRAPSAFLT…TRQQQDIQQS (236 aa)) constitute a Radical SAM core domain. Positions 379-441 (QSMVGRDVSV…RNSLAAVTLA (63 aa)) constitute a TRAM domain.

This sequence belongs to the methylthiotransferase family. MiaB subfamily. As to quaternary structure, monomer. It depends on [4Fe-4S] cluster as a cofactor.

Its subcellular location is the cytoplasm. The catalysed reaction is N(6)-dimethylallyladenosine(37) in tRNA + (sulfur carrier)-SH + AH2 + 2 S-adenosyl-L-methionine = 2-methylsulfanyl-N(6)-dimethylallyladenosine(37) in tRNA + (sulfur carrier)-H + 5'-deoxyadenosine + L-methionine + A + S-adenosyl-L-homocysteine + 2 H(+). Its function is as follows. Catalyzes the methylthiolation of N6-(dimethylallyl)adenosine (i(6)A), leading to the formation of 2-methylthio-N6-(dimethylallyl)adenosine (ms(2)i(6)A) at position 37 in tRNAs that read codons beginning with uridine. This Roseobacter denitrificans (strain ATCC 33942 / OCh 114) (Erythrobacter sp. (strain OCh 114)) protein is tRNA-2-methylthio-N(6)-dimethylallyladenosine synthase.